We begin with the raw amino-acid sequence, 174 residues long: Actin-related protein 2/3 complex subunit 3 (174 aa).

Belongs to the ARPC3 family. Component of the Arp2/3 complex composed of arp2, act2, arc1/p41-ARC, arc2/p34-ARC, arc3/p21-ARC, arc4/p20-ARC and arc5/p16-ARC.

It localises to the cytoplasm. The protein resides in the cytoskeleton. Its subcellular location is the actin patch. In terms of biological role, functions as a component of the Arp2/3 complex which is involved in regulation of actin polymerization and together with an activating nucleation-promoting factor (NPF) mediates the formation of branched actin networks. This is Actin-related protein 2/3 complex subunit 3 (arc3) from Schizosaccharomyces pombe (strain 972 / ATCC 24843) (Fission yeast).